The primary structure comprises 453 residues: Zinc finger and BTB domain-containing protein 44 (453 aa).

A Glycyl lysine isopeptide (Lys-Gly) (interchain with G-Cter in SUMO2) cross-link involves residue Lys4. A BTB domain is found at 31–98 (CDITIRVQDR…AYTATLSINT (68 aa)). 7 positions are modified to phosphoserine: Ser135, Ser159, Ser161, Ser165, Ser191, Ser194, and Ser199. Residue Thr200 is modified to Phosphothreonine. The disordered stretch occupies residues 241-265 (QPEKAKQAENTRTLELPGPSEAGRR). Lys290 participates in a covalent cross-link: Glycyl lysine isopeptide (Lys-Gly) (interchain with G-Cter in SUMO2). Disordered stretches follow at residues 295–324 (SDEEVHEEVSQPVSASQSSLSDQQTVPGSE) and 336–368 (SSSIGSVDEGVTEGLPTLQSTSSTNAHADEDDR). Over residues 304–318 (SQPVSASQSSLSDQQ) the composition is skewed to low complexity. The segment covering 352–361 (TLQSTSSTNA) has biased composition (polar residues). C2H2-type zinc fingers lie at residues 399–421 (FQCPTCGVRFTRIQNLKQHMLIH) and 427–449 (FQCDCCGKKFTRAYSLKMHRLKH).

The protein resides in the nucleus. In Rattus norvegicus (Rat), this protein is Zinc finger and BTB domain-containing protein 44 (Zbtb44).